A 206-amino-acid polypeptide reads, in one-letter code: Large ribosomal subunit protein uL3 (206 aa).

Belongs to the universal ribosomal protein uL3 family. As to quaternary structure, part of the 50S ribosomal subunit. Forms a cluster with proteins L14 and L19.

Functionally, one of the primary rRNA binding proteins, it binds directly near the 3'-end of the 23S rRNA, where it nucleates assembly of the 50S subunit. This is Large ribosomal subunit protein uL3 from Cytophaga hutchinsonii (strain ATCC 33406 / DSM 1761 / CIP 103989 / NBRC 15051 / NCIMB 9469 / D465).